The primary structure comprises 130 residues: Large ribosomal subunit protein bL19 (130 aa).

Belongs to the bacterial ribosomal protein bL19 family.

This protein is located at the 30S-50S ribosomal subunit interface and may play a role in the structure and function of the aminoacyl-tRNA binding site. This chain is Large ribosomal subunit protein bL19, found in Mycoplasma mycoides subsp. mycoides SC (strain CCUG 32753 / NCTC 10114 / PG1).